The chain runs to 641 residues: Kelch-like protein 22 (641 aa).

A disordered region spans residues 1–25; the sequence is MAEDLETMKPSQAPQQPSLPQGSSK. The span at 10–24 shows a compositional bias: low complexity; the sequence is PSQAPQQPSLPQGSS. One can recognise a BTB domain in the interval 50-117; sequence FDVVLKVEGK…IYTSDLALSV (68 aa). Kelch repeat units follow at residues 299–349, 350–399, 400–446, 448–493, 494–544, and 545–593; these read CVVG…VLNN, FVYL…VLGD, FLYA…ALDG, MYVA…ALQE, KIYL…VLAK, and KIFV…VLTL.

Component of the BCR(KLHL22) E3 ubiquitin ligase complex, at least composed of cul3, klhl22 and rbx1.

Its subcellular location is the cytoplasm. It is found in the cytosol. The protein localises to the cytoskeleton. It localises to the microtubule organizing center. The protein resides in the centrosome. Its subcellular location is the spindle. It is found in the nucleus. The protein localises to the lysosome. It functions in the pathway protein modification; protein ubiquitination. Substrate-specific adapter of a BCR (BTB-CUL3-RBX1) E3 ubiquitin ligase complex. The BCR(KLHL22) ubiquitin ligase complex could mediate the monoubiquitination of PLK1 and regulate its activity in spindle assembly checkpoint (SAC) and chromosome segregation. The BCR(KLHL22) ubiquitin ligase complex may also be responsible for the ubiquitin-dependent proteasomal degradation of DEPDC5 and the activation of the TORC1 pathway. The polypeptide is Kelch-like protein 22 (klhl22) (Xenopus tropicalis (Western clawed frog)).